Consider the following 318-residue polypeptide: Protein OPG137 (318 aa).

Residues 145-172 (VYDKDKRIQMLEDEVVNLRNQRSNTKSS) are a coiled coil.

It belongs to the orthopoxvirus OPG137 family. In terms of assembly, homomultimer. Interacts with OPG160. Post-translationally, phosphorylated by a OPG054-independent mechanism.

Its subcellular location is the host cytoplasm. Required for viral crescent formation early during virus morphogenesis. The polypeptide is Protein OPG137 (OPG137) (Vaccinia virus (strain Ankara) (VACV)).